The following is a 346-amino-acid chain: Methylthioribose-1-phosphate isomerase (346 aa).

Substrate-binding positions include 46–48 (RGA), Arg-89, and Gln-196. Catalysis depends on Asp-237, which acts as the Proton donor. 247–248 (NK) lines the substrate pocket.

The protein belongs to the eIF-2B alpha/beta/delta subunits family. MtnA subfamily.

It carries out the reaction 5-(methylsulfanyl)-alpha-D-ribose 1-phosphate = 5-(methylsulfanyl)-D-ribulose 1-phosphate. It functions in the pathway amino-acid biosynthesis; L-methionine biosynthesis via salvage pathway; L-methionine from S-methyl-5-thio-alpha-D-ribose 1-phosphate: step 1/6. Functionally, catalyzes the interconversion of methylthioribose-1-phosphate (MTR-1-P) into methylthioribulose-1-phosphate (MTRu-1-P). In Trichlorobacter lovleyi (strain ATCC BAA-1151 / DSM 17278 / SZ) (Geobacter lovleyi), this protein is Methylthioribose-1-phosphate isomerase.